A 428-amino-acid chain; its full sequence is Gamma-glutamyl phosphate reductase (428 aa).

Belongs to the gamma-glutamyl phosphate reductase family.

Its subcellular location is the cytoplasm. It catalyses the reaction L-glutamate 5-semialdehyde + phosphate + NADP(+) = L-glutamyl 5-phosphate + NADPH + H(+). Its pathway is amino-acid biosynthesis; L-proline biosynthesis; L-glutamate 5-semialdehyde from L-glutamate: step 2/2. Its function is as follows. Catalyzes the NADPH-dependent reduction of L-glutamate 5-phosphate into L-glutamate 5-semialdehyde and phosphate. The product spontaneously undergoes cyclization to form 1-pyrroline-5-carboxylate. This chain is Gamma-glutamyl phosphate reductase, found in Picosynechococcus sp. (strain ATCC 27264 / PCC 7002 / PR-6) (Agmenellum quadruplicatum).